A 426-amino-acid chain; its full sequence is Hemojuvelin (426 aa).

Residues 1 to 35 form the signal peptide; the sequence is MGEPGQSPSPRSSHGSPPTLSTLTLLLLLCGHAHS. The residue at position 46 (tyrosine 46) is a Phosphotyrosine. N-linked (GlcNAc...) asparagine glycosylation occurs at asparagine 118. The disordered stretch occupies residues 119–142; it reads CSRQGPTAPPPPRGPALPGAGSGL. 2 disulfides stabilise this stretch: cysteine 148-cysteine 230 and cysteine 167-cysteine 317. N-linked (GlcNAc...) asparagine glycosylation is found at asparagine 213 and asparagine 372. Aspartate 400 carries the GPI-anchor amidated aspartate lipid modification. Positions 401 to 426 are cleaved as a propeptide — removed in mature form; the sequence is AGVPLSSATLLAPLLSGLFVLWLCIQ.

The protein belongs to the repulsive guidance molecule (RGM) family. As to quaternary structure, interacts with BMP2 and BMP4. Interacts with BMP6. Interacts with BMPR1B. Interacts with TMPRSS6. Post-translationally, autocatalytically cleaved at low pH; the two chains remain linked via two disulfide bonds. Also proteolytically processed by TMPRSS6, several fragments being released in the extracellular space; regulates HJV activity in BMP signaling and thefore iron homeostasis. In terms of tissue distribution, adult and fetal liver, heart, and skeletal muscle.

It localises to the cell membrane. Functionally, acts as a bone morphogenetic protein (BMP) coreceptor. Through enhancement of BMP signaling regulates hepcidin (HAMP) expression and regulates iron homeostasis. This chain is Hemojuvelin, found in Homo sapiens (Human).